The following is a 142-amino-acid chain: Small heat shock protein IbpB (142 aa).

Positions 26–137 (AGESQSFPPY…APQRIAISER (112 aa)) constitute a sHSP domain.

It belongs to the small heat shock protein (HSP20) family. Homodimer. Forms homomultimers of about 100-150 subunits at optimal growth temperatures. Conformation changes to oligomers at high temperatures or high ionic concentrations. The decrease in size of the multimers is accompanied by an increase in chaperone activity.

It localises to the cytoplasm. Its function is as follows. Associates with aggregated proteins, together with IbpA, to stabilize and protect them from irreversible denaturation and extensive proteolysis during heat shock and oxidative stress. Aggregated proteins bound to the IbpAB complex are more efficiently refolded and reactivated by the ATP-dependent chaperone systems ClpB and DnaK/DnaJ/GrpE. Its activity is ATP-independent. This is Small heat shock protein IbpB from Klebsiella pneumoniae (strain 342).